The primary structure comprises 70 residues: Melittin-N (70 aa).

Residues 1 to 21 (MKFLVNVALVFMVVYISYIYA) form the signal peptide. The propeptide at 22-43 (APEPEPAPEPEAEADAEADPEA) is removed by a dipeptidylpeptidase. Glycine 44 bears the N-formylglycine; partial mark. Glutamine 69 bears the Glutamine amide mark.

Belongs to the melittin family. As to quaternary structure, monomer (in solution and for integration into membranes), homotetramer (in solution and potentially as a toroidal pore in membranes), and potenially homomultimer (as a toroidal pore in membranes). Expressed by the venom gland.

It localises to the secreted. The protein resides in the target cell membrane. Main toxin of bee venom with strong hemolytic activity and antimicrobial activity. It has enhancing effects on bee venom phospholipase A2 activity. This amphipathic toxin binds to negatively charged membrane surface and forms pore by inserting into lipid bilayers inducing the leakage of ions and molecules and the enhancement of permeability that ultimately leads to cell lysis. It acts as a voltage-gated pore with higher selectivity for anions over cations. The ion conductance has been shown to be voltage-dependent. Self-association of melittin in membranes is promoted by high ionic strength, but not by the presence of negatively charged lipids. In vivo, intradermal injection into healthy human volunteers produce sharp pain sensation and an inflammatory response. It produces pain by activating primary nociceptor cells directly and indirectly due to its ability to activate plasma membrane phospholipase A2 and its pore-forming activity. Shows lower cytotoxicity when tested on E.coli and cancer cell lines than melittin, as well as lower anti-inflammatory properties and lower properties to interact to small unilamellar liposomes. This chain is Melittin-N (MELT), found in Apis cerana (Indian honeybee).